A 277-amino-acid polypeptide reads, in one-letter code: MGIKFTKMHGLGNDFIVLDGVNQSIQLTVEQIQKLANRHTGIGFDQCLLIESSQTEGIDFNYRIFNADGQEVGQCGNGARCIALFARYYGLTAKNKLTVATKTTLMDLIINEDNSVSVNMGVPRLAPGEIPLLADRQSPEYSLKLNNGNTVNLHAISVGNPHAVLLVENIDTAPVNSLGQQISFHPQFPEQVNVGFMQIVNHEKINLRVYERGCGETIACGSGAVAAAAIARLFYNLSDKITVHLPGGDLCIQWPCPTAPIILTGPAAFVYEGTLLS.

Residues Asn13, Gln46, and Asn66 each coordinate substrate. Cys75 functions as the Proton donor in the catalytic mechanism. Substrate contacts are provided by residues 76–77 (GN), Asn160, Asn193, and 211–212 (ER). Cys220 serves as the catalytic Proton acceptor. 221 to 222 (GS) is a binding site for substrate.

The protein belongs to the diaminopimelate epimerase family. In terms of assembly, homodimer.

Its subcellular location is the cytoplasm. It catalyses the reaction (2S,6S)-2,6-diaminopimelate = meso-2,6-diaminopimelate. The protein operates within amino-acid biosynthesis; L-lysine biosynthesis via DAP pathway; DL-2,6-diaminopimelate from LL-2,6-diaminopimelate: step 1/1. Its function is as follows. Catalyzes the stereoinversion of LL-2,6-diaminopimelate (L,L-DAP) to meso-diaminopimelate (meso-DAP), a precursor of L-lysine and an essential component of the bacterial peptidoglycan. The chain is Diaminopimelate epimerase from Legionella pneumophila (strain Lens).